The chain runs to 137 residues: ATP synthase epsilon chain (137 aa).

It belongs to the ATPase epsilon chain family. As to quaternary structure, F-type ATPases have 2 components, CF(1) - the catalytic core - and CF(0) - the membrane proton channel. CF(1) has five subunits: alpha(3), beta(3), gamma(1), delta(1), epsilon(1). CF(0) has three main subunits: a, b and c.

The protein localises to the cell inner membrane. Functionally, produces ATP from ADP in the presence of a proton gradient across the membrane. The polypeptide is ATP synthase epsilon chain (Ruegeria sp. (strain TM1040) (Silicibacter sp.)).